A 61-amino-acid chain; its full sequence is Small ribosomal subunit protein uS14 (61 aa).

Residues cysteine 24, cysteine 27, cysteine 40, and cysteine 43 each contribute to the Zn(2+) site.

This sequence belongs to the universal ribosomal protein uS14 family. Zinc-binding uS14 subfamily. In terms of assembly, part of the 30S ribosomal subunit. Contacts proteins S3 and S10. The cofactor is Zn(2+).

Functionally, binds 16S rRNA, required for the assembly of 30S particles and may also be responsible for determining the conformation of the 16S rRNA at the A site. The polypeptide is Small ribosomal subunit protein uS14 (Caldicellulosiruptor bescii (strain ATCC BAA-1888 / DSM 6725 / KCTC 15123 / Z-1320) (Anaerocellum thermophilum)).